Consider the following 339-residue polypeptide: Uracil nucleotide/cysteinyl leukotriene receptor (339 aa).

At 1–36 (MDGLETALPSLTDNASLAYSEQCGQETPLENMLFAC) the chain is on the extracellular side. N14 carries N-linked (GlcNAc...) asparagine glycosylation. A helical transmembrane segment spans residues 37-57 (FYLLDFILAFVGNALALWLFI). At 58 to 64 (WDHKSGT) the chain is on the cytoplasmic side. The helical transmembrane segment at 65 to 85 (PANVFLMHLAVADLSCVLVLP) threads the bilayer. Residues 86-105 (TRLVYHFSGNHWPFGEIPCR) are Extracellular-facing. C104 and C181 are disulfide-bonded. A helical transmembrane segment spans residues 106–126 (LTGFLFYLNMYASIYFLTCIS). Over 127-147 (ADRFLAIVHPVKSLKLRRPLY) the chain is Cytoplasmic. A helical membrane pass occupies residues 148-168 (AHLACAFLWIVVAVAMAPLLV). Over 169–195 (SPQTVQTNHTVVCLQLYREKASHHALA) the chain is Extracellular. The N-linked (GlcNAc...) asparagine glycan is linked to N176. Residues 196-216 (SLAVAFTFPFITTVTCYLLII) traverse the membrane as a helical segment. Residues 217-232 (RSLRQGPRIEKHLKNK) lie on the Cytoplasmic side of the membrane. The chain crosses the membrane as a helical span at residues 233-253 (AVRMIAMVLAIFLICFVPYHI). Over 254–280 (HRSVYVLHYRGGGTSCSAQRALALGNR) the chain is Extracellular. A helical transmembrane segment spans residues 281 to 301 (ITSCLTSLNGALDPVMYFFVA). Topologically, residues 302–339 (EKFRHALCNLLCSKRLTGPPPSFEGKTNESSLSARSEL) are cytoplasmic.

Belongs to the G-protein coupled receptor 1 family. In terms of tissue distribution, expressed in brain, kidney, and heart. Highest level in brain.

It is found in the cell membrane. Its function is as follows. Dual specificity receptor for uracil nucleotides and cysteinyl leukotrienes (CysLTs). Signals through G(i) and inhibition of adenylyl cyclase. May mediate brain damage by nucleotides and CysLTs following ischemia. The sequence is that of Uracil nucleotide/cysteinyl leukotriene receptor from Rattus norvegicus (Rat).